Consider the following 498-residue polypeptide: Cyclin-L1 (498 aa).

Cyclin-like stretches follow at residues 68–169 (ERIQ…RILK) and 182–266 (KIIV…NTMK). The tract at residues 294-498 (LKARGQNPNG…SGHSHSRHRR (205 aa)) is disordered. Residues 311-320 (NGFSPASKPS) show a composition bias toward polar residues. Over residues 321 to 341 (SPRDVKMDDKSPNSKLKEPEN) the composition is skewed to basic and acidic residues. The interval 366 to 396 (KNHSRSRSRSTSRSPHRHRRSHSGTYSSHSS) is RS. Over residues 367 to 387 (NHSRSRSRSTSRSPHRHRRSH) the composition is skewed to basic residues. Low complexity predominate over residues 388 to 402 (SGTYSSHSSHSPSPR). Phosphoserine is present on residues serine 409 and serine 412. A compositionally biased stretch (basic and acidic residues) spans 415-426 (RTDRDRPSETSR). Residues 427–440 (HSNKRRRSRSRSRS) are compositionally biased toward basic residues. The span at 441-478 (NSRERVRDRDHIKHKQERSGSGHHWDHRDRERDRSRDH) shows a compositional bias: basic and acidic residues. Positions 479–498 (GRNKRQSRSHSGHSHSRHRR) are enriched in basic residues.

Belongs to the cyclin family. Cyclin L subfamily.

The protein resides in the nucleus speckle. It localises to the nucleus. It is found in the nucleoplasm. In terms of biological role, involved in pre-mRNA splicing. The sequence is that of Cyclin-L1 (ccnl1) from Danio rerio (Zebrafish).